Here is a 122-residue protein sequence, read N- to C-terminus: Large ribosomal subunit protein uL14 (122 aa).

The protein belongs to the universal ribosomal protein uL14 family. As to quaternary structure, part of the 50S ribosomal subunit. Forms a cluster with proteins L3 and L19. In the 70S ribosome, L14 and L19 interact and together make contacts with the 16S rRNA in bridges B5 and B8.

Its function is as follows. Binds to 23S rRNA. Forms part of two intersubunit bridges in the 70S ribosome. In Desulfovibrio desulfuricans (strain ATCC 27774 / DSM 6949 / MB), this protein is Large ribosomal subunit protein uL14.